The chain runs to 544 residues: Protein angel homolog 2 (544 aa).

This sequence belongs to the CCR4/nocturin family.

The chain is Protein angel homolog 2 (ANGEL2) from Bos taurus (Bovine).